We begin with the raw amino-acid sequence, 307 residues long: tRNA N(3)-methylcytidine methyltransferase trm140 (307 aa).

S-adenosyl-L-methionine contacts are provided by W83, Y87, G125, D150, D176, L177, and I197.

Belongs to the methyltransferase superfamily. METL family.

It catalyses the reaction cytidine(32) in tRNA(Thr) + S-adenosyl-L-methionine = N(3)-methylcytidine(32) in tRNA(Thr) + S-adenosyl-L-homocysteine + H(+). Functionally, S-adenosyl-L-methionine-dependent methyltransferase that mediates N(3)-methylcytidine modification of residue 32 of the tRNA anticodon loop of tRNA(Thr). Does not catalyze N(3)-methylcytidine modification of tRNA(Ser). The protein is tRNA N(3)-methylcytidine methyltransferase trm140 of Schizosaccharomyces pombe (strain 972 / ATCC 24843) (Fission yeast).